A 95-amino-acid chain; its full sequence is Aspartyl/glutamyl-tRNA(Asn/Gln) amidotransferase subunit C (95 aa).

It belongs to the GatC family. As to quaternary structure, heterotrimer of A, B and C subunits.

It catalyses the reaction L-glutamyl-tRNA(Gln) + L-glutamine + ATP + H2O = L-glutaminyl-tRNA(Gln) + L-glutamate + ADP + phosphate + H(+). The enzyme catalyses L-aspartyl-tRNA(Asn) + L-glutamine + ATP + H2O = L-asparaginyl-tRNA(Asn) + L-glutamate + ADP + phosphate + 2 H(+). Allows the formation of correctly charged Asn-tRNA(Asn) or Gln-tRNA(Gln) through the transamidation of misacylated Asp-tRNA(Asn) or Glu-tRNA(Gln) in organisms which lack either or both of asparaginyl-tRNA or glutaminyl-tRNA synthetases. The reaction takes place in the presence of glutamine and ATP through an activated phospho-Asp-tRNA(Asn) or phospho-Glu-tRNA(Gln). The chain is Aspartyl/glutamyl-tRNA(Asn/Gln) amidotransferase subunit C from Geobacter metallireducens (strain ATCC 53774 / DSM 7210 / GS-15).